Consider the following 350-residue polypeptide: Probable dTDP-glucose 4,6-dehydratase (350 aa).

7-13 contributes to the NAD(+) binding site; the sequence is GGAGFIG. Thr-132 contacts substrate. Asp-133 (proton donor) is an active-site residue. Catalysis depends on proton acceptor residues Glu-134 and Tyr-157.

The protein belongs to the NAD(P)-dependent epimerase/dehydratase family. dTDP-glucose dehydratase subfamily. It depends on NAD(+) as a cofactor.

It carries out the reaction dTDP-alpha-D-glucose = dTDP-4-dehydro-6-deoxy-alpha-D-glucose + H2O. The protein operates within carbohydrate biosynthesis; dTDP-L-rhamnose biosynthesis. The protein is Probable dTDP-glucose 4,6-dehydratase of Sinorhizobium fredii (strain NBRC 101917 / NGR234).